The chain runs to 589 residues: uncharacterized protein (589 aa).

The RRM domain occupies 242–314 (TALEVRNIPE…RFIKIFWYNP (73 aa)). Disordered stretches follow at residues 322-348 (PKKF…VDPA), 443-465 (ESPA…RGTN), and 566-589 (TSME…GRWR). Ser-330 carries the post-translational modification Phosphoserine. Low complexity predominate over residues 330 to 340 (SPTTSDSSNVE). Thr-332 carries the phosphothreonine modification. Ser-334 bears the Phosphoserine mark. Over residues 566 to 579 (TSMETGESNTSDNM) the composition is skewed to polar residues.

It localises to the nucleus. This is an uncharacterized protein from Schizosaccharomyces pombe (strain 972 / ATCC 24843) (Fission yeast).